Here is a 107-residue protein sequence, read N- to C-terminus: UPF0102 protein Tlet_0667 (107 aa).

It belongs to the UPF0102 family.

The chain is UPF0102 protein Tlet_0667 from Pseudothermotoga lettingae (strain ATCC BAA-301 / DSM 14385 / NBRC 107922 / TMO) (Thermotoga lettingae).